We begin with the raw amino-acid sequence, 420 residues long: Napsin-A (420 aa).

The signal sequence occupies residues 1–25 (MSPPPLLQPLLLLLPLLNVEPSGAT). Positions 26–63 (LIRIPLHRVQPGRRILNLLRGWREPAELPKLGAPSPGD) are cleaved as a propeptide — activation peptide. In terms of domain architecture, Peptidase A1 spans 78 to 399 (YFGEIGLGTP…MKSSARVGLA (322 aa)). The N-linked (GlcNAc...) asparagine glycan is linked to asparagine 90. Aspartate 96 is a catalytic residue. A disulfide bridge connects residues cysteine 109 and cysteine 116. Asparagine 133 is a glycosylation site (N-linked (GlcNAc...) asparagine). A disulfide bridge links cysteine 274 with cysteine 278. Residue aspartate 283 is part of the active site. A disulfide bridge connects residues cysteine 317 and cysteine 354. An N-linked (GlcNAc...) asparagine glycan is attached at asparagine 336.

The protein belongs to the peptidase A1 family. In terms of tissue distribution, expressed predominantly in adult lung (type II pneumocytes) and kidney and in fetal lung. Low levels in adult spleen and very low levels in peripheral blood leukocytes.

Its subcellular location is the secreted. May be involved in processing of pneumocyte surfactant precursors. This Homo sapiens (Human) protein is Napsin-A (NAPSA).